The following is a 332-amino-acid chain: UPF0194 membrane protein YbhG (332 aa).

Residues methionine 1–alanine 16 form the signal peptide. The stretch at glutamate 108 to alanine 209 forms a coiled coil.

It belongs to the UPF0194 family.

Its subcellular location is the periplasm. The protein is UPF0194 membrane protein YbhG of Escherichia coli O127:H6 (strain E2348/69 / EPEC).